An 83-amino-acid polypeptide reads, in one-letter code: NAD(P)H-quinone oxidoreductase subunit L (83 aa).

A run of 2 helical transmembrane segments spans residues 15 to 35 (LMVL…VPLL) and 53 to 73 (LSAY…APFL).

Belongs to the complex I NdhL subunit family. In terms of assembly, NDH-1 can be composed of about 15 different subunits; different subcomplexes with different compositions have been identified which probably have different functions.

The protein resides in the cellular thylakoid membrane. It carries out the reaction a plastoquinone + NADH + (n+1) H(+)(in) = a plastoquinol + NAD(+) + n H(+)(out). The catalysed reaction is a plastoquinone + NADPH + (n+1) H(+)(in) = a plastoquinol + NADP(+) + n H(+)(out). Functionally, NDH-1 shuttles electrons from an unknown electron donor, via FMN and iron-sulfur (Fe-S) centers, to quinones in the respiratory and/or the photosynthetic chain. The immediate electron acceptor for the enzyme in this species is believed to be plastoquinone. Couples the redox reaction to proton translocation, and thus conserves the redox energy in a proton gradient. Cyanobacterial NDH-1 also plays a role in inorganic carbon-concentration. The chain is NAD(P)H-quinone oxidoreductase subunit L from Prochlorococcus marinus (strain MIT 9303).